A 96-amino-acid polypeptide reads, in one-letter code: UPF0235 protein VP2619 (96 aa).

The protein belongs to the UPF0235 family.

This Vibrio parahaemolyticus serotype O3:K6 (strain RIMD 2210633) protein is UPF0235 protein VP2619.